The chain runs to 221 residues: N-(5'-phosphoribosyl)anthranilate isomerase (221 aa).

The protein belongs to the TrpF family.

It carries out the reaction N-(5-phospho-beta-D-ribosyl)anthranilate = 1-(2-carboxyphenylamino)-1-deoxy-D-ribulose 5-phosphate. The protein operates within amino-acid biosynthesis; L-tryptophan biosynthesis; L-tryptophan from chorismate: step 3/5. In Chlorobaculum parvum (strain DSM 263 / NCIMB 8327) (Chlorobium vibrioforme subsp. thiosulfatophilum), this protein is N-(5'-phosphoribosyl)anthranilate isomerase.